The sequence spans 161 residues: RNA pyrophosphohydrolase (161 aa).

A Nudix hydrolase domain is found at 6-149; sequence GYRPNVGIIL…KREVYRRAMR (144 aa). The short motif at 38–59 is the Nudix box element; it reads GGIKKDESPEEALFRELKEEVG.

This sequence belongs to the Nudix hydrolase family. RppH subfamily. It depends on a divalent metal cation as a cofactor.

In terms of biological role, accelerates the degradation of transcripts by removing pyrophosphate from the 5'-end of triphosphorylated RNA, leading to a more labile monophosphorylated state that can stimulate subsequent ribonuclease cleavage. The chain is RNA pyrophosphohydrolase from Hahella chejuensis (strain KCTC 2396).